We begin with the raw amino-acid sequence, 484 residues long: Cobyric acid synthase (484 aa).

One can recognise a GATase cobBQ-type domain in the interval 249-438 (QLRVAVPVFT…LHGIFDRPET (190 aa)). The active-site Nucleophile is Cys330. The active site involves His430.

The protein belongs to the CobB/CobQ family. CobQ subfamily.

The protein operates within cofactor biosynthesis; adenosylcobalamin biosynthesis. In terms of biological role, catalyzes amidations at positions B, D, E, and G on adenosylcobyrinic A,C-diamide. NH(2) groups are provided by glutamine, and one molecule of ATP is hydrogenolyzed for each amidation. The polypeptide is Cobyric acid synthase (Vibrio cholerae serotype O1 (strain ATCC 39315 / El Tor Inaba N16961)).